The primary structure comprises 883 residues: Translation initiation factor IF-2 (883 aa).

2 disordered regions span residues Lys-52–Glu-102 and Val-115–Pro-297. 2 stretches are compositionally biased toward basic and acidic residues: residues Val-115–Thr-179 and Ala-204–Ala-237. The span at Lys-239–Lys-248 shows a compositional bias: low complexity. The segment covering Pro-265–Arg-275 has biased composition (basic residues). Positions Arg-276–Lys-285 are enriched in low complexity. One can recognise a tr-type G domain in the interval Pro-383 to Glu-550. Residues Gly-392–Thr-399 form a G1 region. Position 392–399 (Gly-392–Thr-399) interacts with GTP. The segment at Gly-417 to His-421 is G2. The tract at residues Asp-438 to Gly-441 is G3. Residues Asp-438–His-442 and Asn-492–Asp-495 each bind GTP. A G4 region spans residues Asn-492–Asp-495. The G5 stretch occupies residues Ser-528–Lys-530.

The protein belongs to the TRAFAC class translation factor GTPase superfamily. Classic translation factor GTPase family. IF-2 subfamily.

The protein localises to the cytoplasm. Its function is as follows. One of the essential components for the initiation of protein synthesis. Protects formylmethionyl-tRNA from spontaneous hydrolysis and promotes its binding to the 30S ribosomal subunits. Also involved in the hydrolysis of GTP during the formation of the 70S ribosomal complex. This Alkalilimnicola ehrlichii (strain ATCC BAA-1101 / DSM 17681 / MLHE-1) protein is Translation initiation factor IF-2.